The chain runs to 100 residues: NADH-quinone oxidoreductase subunit K (100 aa).

A run of 3 helical transmembrane segments spans residues 4-24 (YEYY…GIII), 29-49 (IAML…FVAF), and 60-80 (VFVF…LGLI).

It belongs to the complex I subunit 4L family. NDH-1 is composed of 14 different subunits. Subunits NuoA, H, J, K, L, M, N constitute the membrane sector of the complex.

It localises to the cell inner membrane. The enzyme catalyses a quinone + NADH + 5 H(+)(in) = a quinol + NAD(+) + 4 H(+)(out). NDH-1 shuttles electrons from NADH, via FMN and iron-sulfur (Fe-S) centers, to quinones in the respiratory chain. The immediate electron acceptor for the enzyme in this species is believed to be ubiquinone. Couples the redox reaction to proton translocation (for every two electrons transferred, four hydrogen ions are translocated across the cytoplasmic membrane), and thus conserves the redox energy in a proton gradient. The polypeptide is NADH-quinone oxidoreductase subunit K (Persephonella marina (strain DSM 14350 / EX-H1)).